Consider the following 1223-residue polypeptide: Glycerophosphocholine phosphodiesterase GDE1 (1223 aa).

Positions 1–213 (MKFGKTFANH…GTNQQMSTMK (213 aa)) constitute an SPX domain. Positions 43–59 (HNKNSYDEGRPPTKMRD) are enriched in basic and acidic residues. The disordered stretch occupies residues 43–64 (HNKNSYDEGRPPTKMRDSSNSA). 6 ANK repeats span residues 427 to 456 (YKRT…EWNI), 472 to 502 (ESLT…NVKL), 504 to 533 (SSSL…DINY), 538 to 567 (LHET…DLEI), 572 to 601 (FGWT…NFDI), and 605 to 634 (GGWT…LVTH). Phosphoserine is present on Ser-653. The GP-PDE domain maps to 872 to 1217 (TRVIGHRGLG…DSVLAIRRGL (346 aa)). A divalent metal cation contacts are provided by Glu-911, Asp-913, and His-926. A Phosphoserine modification is found at Ser-983.

Belongs to the GDE1 family. A divalent metal cation is required as a cofactor.

The protein localises to the cytoplasm. It catalyses the reaction sn-glycerol 3-phosphocholine + H2O = sn-glycerol 3-phosphate + choline + H(+). The catalysed reaction is sn-glycero-3-phospho-1D-myo-inositol + H2O = myo-inositol + sn-glycerol 3-phosphate + H(+). In terms of biological role, glycerophosphocholine glycerophosphodiesterase responsible for the hydrolysis of intracellular glycerophosphocholine into glycerol-phosphate and choline. The choline is used for phosphatidyl-choline synthesis. Required for utilization of glycerophosphocholine as phosphate source. May also use glycerophosphoinositol as substrate in vivo. In Saccharomyces cerevisiae (strain ATCC 204508 / S288c) (Baker's yeast), this protein is Glycerophosphocholine phosphodiesterase GDE1.